The primary structure comprises 404 residues: MEEILRLRRSVSIDDYIEKVKPIVEAVKREGDKAVIRFTRDLDGVELDSLRVTEDEFEKAYDAVDDGLIDALEVAKENIYRFHYVTSVERDMKVEFEDCVMGKIYTPIEKVGAYIPGGRASYPSTALMIGVPAKIAGVEKLVACTPPNKDGKVNPLTLVALDIAEFDEVYKAGGAQAIAAMAYGTETVEKVYKIVGPGNIYVTAAKLLVAKDVAIDMPAGPSEILVIADETANADFIACDCLAQLEHDPMAVAVVLTTSRKVADEVEKKVKSEGDFSNFAVFVVEDLAEAFEISNEFAPEHLTVAVKNPEEWLGKVRNAGSVFLGNFSPVAAGDYASGTNHVLPTAGYAKIYGGLSVESFLKHFTFQMLSEESMRRIGGDVVKIAEAEGLRWHAESVRKRLEKI.

3 residues coordinate NAD(+): Tyr114, Gln176, and Asn199. Substrate is bound by residues Ser222, Gln244, and His247. Residues Gln244 and His247 each contribute to the Zn(2+) site. Residues Glu300 and His301 each act as proton acceptor in the active site. Substrate contacts are provided by His301, Asp334, Glu388, and His393. Zn(2+) is bound at residue Asp334. His393 contacts Zn(2+).

Belongs to the histidinol dehydrogenase family. Zn(2+) is required as a cofactor.

It carries out the reaction L-histidinol + 2 NAD(+) + H2O = L-histidine + 2 NADH + 3 H(+). The protein operates within amino-acid biosynthesis; L-histidine biosynthesis; L-histidine from 5-phospho-alpha-D-ribose 1-diphosphate: step 9/9. In terms of biological role, catalyzes the sequential NAD-dependent oxidations of L-histidinol to L-histidinaldehyde and then to L-histidine. The chain is Histidinol dehydrogenase (hisD) from Archaeoglobus fulgidus (strain ATCC 49558 / DSM 4304 / JCM 9628 / NBRC 100126 / VC-16).